We begin with the raw amino-acid sequence, 606 residues long: Probable glutamine--fructose-6-phosphate aminotransferase [isomerizing] (606 aa).

Catalysis depends on Cys2, which acts as the For GATase activity. Positions 2 to 224 constitute a Glutamine amidotransferase type-2 domain; sequence CGISACLNHT…DNDYGYITNN (223 aa). SIS domains follow at residues 282–427 and 458–596; these read FFPE…SLDN and LLEF…PDYP.

It carries out the reaction D-fructose 6-phosphate + L-glutamine = D-glucosamine 6-phosphate + L-glutamate. Its pathway is nucleotide-sugar biosynthesis; UDP-N-acetyl-alpha-D-glucosamine biosynthesis; alpha-D-glucosamine 6-phosphate from D-fructose 6-phosphate: step 1/1. In terms of biological role, controls the flux of glucose into the hexosamine pathway. Most likely involved in regulating the availability of precursors for glycosylation of proteins (Potential). The chain is Probable glutamine--fructose-6-phosphate aminotransferase [isomerizing] from Acanthamoeba polyphaga (Amoeba).